The following is a 324-amino-acid chain: Ribosomal RNA small subunit methyltransferase H (324 aa).

S-adenosyl-L-methionine-binding positions include 41 to 43 (GGH), aspartate 60, tyrosine 87, aspartate 111, and glutamine 118.

This sequence belongs to the methyltransferase superfamily. RsmH family.

It localises to the cytoplasm. The catalysed reaction is cytidine(1402) in 16S rRNA + S-adenosyl-L-methionine = N(4)-methylcytidine(1402) in 16S rRNA + S-adenosyl-L-homocysteine + H(+). Its function is as follows. Specifically methylates the N4 position of cytidine in position 1402 (C1402) of 16S rRNA. The sequence is that of Ribosomal RNA small subunit methyltransferase H from Nocardia farcinica (strain IFM 10152).